The chain runs to 347 residues: NADH-ubiquinone oxidoreductase chain 2 (347 aa).

11 helical membrane passes run 3 to 23 (PVVL…VMTT), 25 to 45 (HWLL…PILM), 59 to 79 (YFLT…INLI), 96 to 116 (IIMT…FWVP), 122 to 142 (IQLS…MSIL), 149 to 169 (INLH…GWGG), 178 to 198 (IMAY…IYNP), 200 to 220 (MALL…MTFM), 237 to 257 (MPLL…LPPL), 274 to 294 (NSII…FFYM), and 325 to 345 (LLSP…MLAL).

This sequence belongs to the complex I subunit 2 family. Core subunit of respiratory chain NADH dehydrogenase (Complex I) which is composed of 45 different subunits. Interacts with TMEM242.

It is found in the mitochondrion inner membrane. The enzyme catalyses a ubiquinone + NADH + 5 H(+)(in) = a ubiquinol + NAD(+) + 4 H(+)(out). In terms of biological role, core subunit of the mitochondrial membrane respiratory chain NADH dehydrogenase (Complex I) which catalyzes electron transfer from NADH through the respiratory chain, using ubiquinone as an electron acceptor. Essential for the catalytic activity and assembly of complex I. The chain is NADH-ubiquinone oxidoreductase chain 2 from Paranyctimene raptor (Unstriped tube-nosed fruit bat).